A 73-amino-acid chain; its full sequence is Putative defensin-like protein 57 (73 aa).

An N-terminal signal peptide occupies residues 1–25 (MRFTSMIFVLVVILINSLFNFNVLA). 4 disulfide bridges follow: Cys-37–Cys-71, Cys-41–Cys-64, Cys-50–Cys-69, and Cys-54–Cys-70.

Belongs to the DEFL family.

The protein localises to the secreted. This chain is Putative defensin-like protein 57, found in Arabidopsis thaliana (Mouse-ear cress).